A 63-amino-acid chain; its full sequence is Putative transmembrane protein ORF63 (63 aa).

Topologically, residues 1 to 8 (MQSGNFTL) are extracellular. Residues 9 to 29 (EVIMYLINSILAFIMIFFTFV) form a helical membrane-spanning segment. The Cytoplasmic segment spans residues 30 to 31 (NP). A helical transmembrane segment spans residues 32–52 (SLLKCQYWTYILVALITAIIF). The Extracellular portion of the chain corresponds to 53–63 (HTGSKVGKSSG).

It is found in the host membrane. This chain is Putative transmembrane protein ORF63, found in Acidianus filamentous virus 1 (isolate United States/Yellowstone) (AFV-1).